The primary structure comprises 1870 residues: Dedicator of cytokinesis protein 5 (1870 aa).

An SH3 domain is found at 8-69 (KRQKYGVAIY…PETYIHLKEA (62 aa)). Residue S365 is modified to Phosphoserine. Residues 443–627 (RNDIYVTLIH…DSFQIATLIC (185 aa)) form the C2 DOCK-type domain. An N6-acetyllysine modification is found at K818. One can recognise a DOCKER domain in the interval 1231–1642 (YKEKKREDIY…VEKHYGVITL (412 aa)). Residues 1679 to 1702 (VVSTSSNSSDNAPSRPGSDGSILE) form a disordered region. Phosphoserine occurs at positions 1756, 1766, 1785, and 1789. The interval 1772–1870 (NRLSPFHGSS…GIPTSEPGSQ (99 aa)) is disordered. The span at 1784–1794 (QSTPLSPPPLT) shows a compositional bias: pro residues. T1794 is subject to Phosphothreonine. A compositionally biased stretch (polar residues) spans 1797–1808 (ATRTLSSPSLQT). T1814 bears the Phosphothreonine mark. Over residues 1815-1824 (PVPPPPPPKS) the composition is skewed to pro residues. A phosphoserine mark is found at S1834 and S1869.

This sequence belongs to the DOCK family. In terms of assembly, interacts with CRK and CRKL. Interacts (via N-terminus) with tensin TNS3 (via N-terminus); the interaction increases DOCK5 guanine nucleotide exchange activity towards Rac. Interacts with ELMO1.

The protein localises to the cytoplasm. It localises to the cell membrane. Its subcellular location is the cell projection. It is found in the podosome. Its function is as follows. Guanine nucleotide exchange factor (GEF) for Rho and Rac. GEF proteins activate small GTPases by exchanging bound GDP for free GTP. Along with DOCK1, mediates CRK/CRKL regulation of epithelial and endothelial cell spreading and migration on type IV collagen. The sequence is that of Dedicator of cytokinesis protein 5 (DOCK5) from Homo sapiens (Human).